The following is a 1171-amino-acid chain: ATP-dependent helicase/deoxyribonuclease subunit B (1171 aa).

A UvrD-like helicase ATP-binding domain is found at 1-390; it reads MSLRFVIGRA…HPLVECIRSA (390 aa). ATP is bound at residue 8–15; sequence GRAGSGKS. In terms of domain architecture, UvrD-like helicase C-terminal spans 281–587; that stretch reads MEQPRFHSPA…QFANIPPSLD (307 aa). Residues cysteine 805, cysteine 1129, cysteine 1132, and cysteine 1138 each contribute to the [4Fe-4S] cluster site.

This sequence belongs to the helicase family. AddB/RexB type 1 subfamily. As to quaternary structure, heterodimer of AddA and AddB. Mg(2+) is required as a cofactor. Requires [4Fe-4S] cluster as cofactor.

Its function is as follows. The heterodimer acts as both an ATP-dependent DNA helicase and an ATP-dependent, dual-direction single-stranded exonuclease. Recognizes the chi site generating a DNA molecule suitable for the initiation of homologous recombination. The AddB subunit has 5' -&gt; 3' nuclease activity but not helicase activity. This Bacillus cereus (strain ATCC 10987 / NRS 248) protein is ATP-dependent helicase/deoxyribonuclease subunit B.